The sequence spans 176 residues: ATP-dependent protease subunit HslV (176 aa).

Thr2 is an active-site residue. Na(+)-binding residues include Gly157, Cys160, and Thr163.

This sequence belongs to the peptidase T1B family. HslV subfamily. In terms of assembly, a double ring-shaped homohexamer of HslV is capped on each side by a ring-shaped HslU homohexamer. The assembly of the HslU/HslV complex is dependent on binding of ATP.

The protein resides in the cytoplasm. It catalyses the reaction ATP-dependent cleavage of peptide bonds with broad specificity.. Its activity is regulated as follows. Allosterically activated by HslU binding. In terms of biological role, protease subunit of a proteasome-like degradation complex believed to be a general protein degrading machinery. The chain is ATP-dependent protease subunit HslV from Escherichia coli O45:K1 (strain S88 / ExPEC).